The chain runs to 666 residues: UvrABC system protein B (666 aa).

The Helicase ATP-binding domain maps to 25-412 (EQVQAGAPYQ…EEQIVEQVIR (388 aa)). 38 to 45 (GATGTGKT) contacts ATP. The short motif at 91-114 (YYDYYQPEAYIPVTDTYIAKTASI) is the Beta-hairpin element. The Helicase C-terminal domain occupies 429-595 (QVDDLLAEIQ…PIIKRSSNAI (167 aa)). The region spanning 626–661 (PNLITQLEAQMKEAAKNLEFEEAAQYRDRIKKLRER) is the UVR domain.

The protein belongs to the UvrB family. As to quaternary structure, forms a heterotetramer with UvrA during the search for lesions. Interacts with UvrC in an incision complex.

It localises to the cytoplasm. Functionally, the UvrABC repair system catalyzes the recognition and processing of DNA lesions. A damage recognition complex composed of 2 UvrA and 2 UvrB subunits scans DNA for abnormalities. Upon binding of the UvrA(2)B(2) complex to a putative damaged site, the DNA wraps around one UvrB monomer. DNA wrap is dependent on ATP binding by UvrB and probably causes local melting of the DNA helix, facilitating insertion of UvrB beta-hairpin between the DNA strands. Then UvrB probes one DNA strand for the presence of a lesion. If a lesion is found the UvrA subunits dissociate and the UvrB-DNA preincision complex is formed. This complex is subsequently bound by UvrC and the second UvrB is released. If no lesion is found, the DNA wraps around the other UvrB subunit that will check the other stand for damage. This Synechococcus sp. (strain ATCC 27144 / PCC 6301 / SAUG 1402/1) (Anacystis nidulans) protein is UvrABC system protein B.